The following is a 203-amino-acid chain: Recombination protein RecR (203 aa).

The C4-type zinc finger occupies 58 to 73 (CDYCGNLDVVSICNIC). The Toprim domain occupies 81–177 (SIIAIVESVA…KISKLASGIP (97 aa)).

This sequence belongs to the RecR family.

Its function is as follows. May play a role in DNA repair. It seems to be involved in an RecBC-independent recombinational process of DNA repair. It may act with RecF and RecO. This is Recombination protein RecR from Orientia tsutsugamushi (strain Boryong) (Rickettsia tsutsugamushi).